We begin with the raw amino-acid sequence, 92 residues long: Protein canopy homolog 1 (92 aa).

Belongs to the canopy family.

The protein is Protein canopy homolog 1 (CNPY1) of Homo sapiens (Human).